The following is a 263-amino-acid chain: Protein PUN1 (263 aa).

Topologically, residues 1–6 (MRNFFT) are cytoplasmic. Residues 7-27 (LFFAAIFSLGALILAIVACAG) traverse the membrane as a helical segment. The Extracellular portion of the chain corresponds to 28–143 (STKNYSPINK…MTYYNNLVKC (116 aa)). The N-linked (GlcNAc...) asparagine glycan is linked to N100. A helical membrane pass occupies residues 144–164 (MFITILIGIVLTFVNLVFNVL). The Cytoplasmic portion of the chain corresponds to 165–172 (RWIIHIRP). Residues 173-193 (LTWFGAFFSFFAFAALLVSIG) traverse the membrane as a helical segment. At 194-223 (SCLGTYSYIKYILKHNYSDYGISMSIGRNY) the chain is on the extracellular side. N209 carries an N-linked (GlcNAc...) asparagine glycan. The chain crosses the membrane as a helical span at residues 224 to 244 (QGLMWGAVVGALLNFILWCSV). At 245 to 263 (RSRPTVIYANAPIEEKPLI) the chain is on the cytoplasmic side. K260 participates in a covalent cross-link: Glycyl lysine isopeptide (Lys-Gly) (interchain with G-Cter in ubiquitin).

This sequence belongs to the SUR7 family. N-glycosylated.

Its subcellular location is the cell membrane. Its function is as follows. Contributes to the wild-type cellular response to nitrogen stress through signaling pathways that regulate the expression of genes involved in amino acid biosynthesis. Required for wild-type filamentous growth, cell growth, and cell-cell adhesion. In Saccharomyces cerevisiae (strain ATCC 204508 / S288c) (Baker's yeast), this protein is Protein PUN1 (PUN1).